The primary structure comprises 440 residues: 3-phosphoshikimate 1-carboxyvinyltransferase (440 aa).

3-phosphoshikimate-binding residues include K26, S27, and R31. K26 provides a ligand contact to phosphoenolpyruvate. Phosphoenolpyruvate contacts are provided by G99 and R127. The 3-phosphoshikimate site is built by S172, Q174, D320, and K347. Q174 lines the phosphoenolpyruvate pocket. The active-site Proton acceptor is the D320. The phosphoenolpyruvate site is built by R351 and R392.

The protein belongs to the EPSP synthase family. As to quaternary structure, monomer.

The protein resides in the cytoplasm. The catalysed reaction is 3-phosphoshikimate + phosphoenolpyruvate = 5-O-(1-carboxyvinyl)-3-phosphoshikimate + phosphate. It participates in metabolic intermediate biosynthesis; chorismate biosynthesis; chorismate from D-erythrose 4-phosphate and phosphoenolpyruvate: step 6/7. In terms of biological role, catalyzes the transfer of the enolpyruvyl moiety of phosphoenolpyruvate (PEP) to the 5-hydroxyl of shikimate-3-phosphate (S3P) to produce enolpyruvyl shikimate-3-phosphate and inorganic phosphate. The protein is 3-phosphoshikimate 1-carboxyvinyltransferase of Xanthomonas axonopodis pv. citri (strain 306).